Reading from the N-terminus, the 265-residue chain is 2-amino-3,7-dideoxy-D-threo-hept-6-ulosonate synthase (265 aa).

Asp25 serves as the catalytic Proton acceptor. 1-deoxy-D-threo-hexo-2,5-diulose 6-phosphate-binding positions include 25-29 (DHGIT) and 144-146 (YAR). Tyr144 acts as the Proton donor in catalysis. The Schiff-base intermediate with substrate role is filled by Lys174. Residues 199 to 200 (GG) and 226 to 227 (GR) contribute to the 1-deoxy-D-threo-hexo-2,5-diulose 6-phosphate site.

It belongs to the DeoC/FbaB aldolase family. ADHS subfamily. Homodecamer.

The catalysed reaction is 1-deoxy-D-threo-hexo-2,5-diulose 6-phosphate + L-aspartate 4-semialdehyde = 2,3-dioxopropyl phosphate + 2-amino-2,3,7-trideoxy-D-lyxo-hept-6-ulosonate. Its function is as follows. Catalyzes a transaldol reaction between 6-deoxy-5-ketofructose 1-phosphate (DKFP) and L-aspartate semialdehyde (ASA) with an elimination of hydroxypyruvaldehyde phosphate to yield 2-amino-3,7-dideoxy-D-threo-hept-6-ulosonate (ADH). Plays a key role in an alternative pathway of the biosynthesis of 3-dehydroquinate (DHQ), which is involved in the canonical pathway for the biosynthesis of aromatic amino acids. The sequence is that of 2-amino-3,7-dideoxy-D-threo-hept-6-ulosonate synthase from Halobacterium salinarum (strain ATCC 700922 / JCM 11081 / NRC-1) (Halobacterium halobium).